The sequence spans 155 residues: 6,7-dimethyl-8-ribityllumazine synthase (155 aa).

Residues Phe24, 58–60, and 82–84 each bind 5-amino-6-(D-ribitylamino)uracil; these read AFE and VII. (2S)-2-hydroxy-3-oxobutyl phosphate is bound at residue 87–88; the sequence is ST. His90 acts as the Proton donor in catalysis. Phe115 lines the 5-amino-6-(D-ribitylamino)uracil pocket. Arg129 serves as a coordination point for (2S)-2-hydroxy-3-oxobutyl phosphate.

Belongs to the DMRL synthase family.

It carries out the reaction (2S)-2-hydroxy-3-oxobutyl phosphate + 5-amino-6-(D-ribitylamino)uracil = 6,7-dimethyl-8-(1-D-ribityl)lumazine + phosphate + 2 H2O + H(+). It participates in cofactor biosynthesis; riboflavin biosynthesis; riboflavin from 2-hydroxy-3-oxobutyl phosphate and 5-amino-6-(D-ribitylamino)uracil: step 1/2. In terms of biological role, catalyzes the formation of 6,7-dimethyl-8-ribityllumazine by condensation of 5-amino-6-(D-ribitylamino)uracil with 3,4-dihydroxy-2-butanone 4-phosphate. This is the penultimate step in the biosynthesis of riboflavin. In Chlorobium chlorochromatii (strain CaD3), this protein is 6,7-dimethyl-8-ribityllumazine synthase.